Here is a 351-residue protein sequence, read N- to C-terminus: Phosphate acyltransferase (351 aa).

Belongs to the PlsX family. Homodimer. Probably interacts with PlsY.

It is found in the cytoplasm. The catalysed reaction is a fatty acyl-[ACP] + phosphate = an acyl phosphate + holo-[ACP]. Its pathway is lipid metabolism; phospholipid metabolism. Functionally, catalyzes the reversible formation of acyl-phosphate (acyl-PO(4)) from acyl-[acyl-carrier-protein] (acyl-ACP). This enzyme utilizes acyl-ACP as fatty acyl donor, but not acyl-CoA. The sequence is that of Phosphate acyltransferase from Maricaulis maris (strain MCS10) (Caulobacter maris).